A 131-amino-acid chain; its full sequence is Universal stress protein C (131 aa).

The protein belongs to the universal stress protein A family.

It is found in the cytoplasm. Required for resistance to DNA-damaging agents. The protein is Universal stress protein C (uspC) of Salmonella typhi.